Reading from the N-terminus, the 412-residue chain is MHCYLLSVFLTLDLAAVALSLSTCSTLDMDQFMRKRIEAIRGQILSKLKLTSPPDEYPEPEEVPPEVISIYNSTRDLLQEKANHRAATCERERSDEEYYAKEVYKIDMQPFYPENAIPPSYYSLYFRIVRFDVSAMEKNASNLVKAEFRVFRLQNSKARVSEQRIELYQVLKSKELSSPGQRYIDSKVVKTRAEGEWLSFDVTEAVHEWLHHRDRNLGFKISLHCPCCTFVPSNNYIIPNKSEEPEARFAGIDDYTYSSGDVKALKSNRKKYSGKTPHLLLMLLPSYRLESQQPSRRKKRALDAAYCFRNVQDNCCLRPLYIDFKRDLGWKWIHEPKGYHANFCAGACPYLWSSDTQHSRVLSLYNTINPEASASPCCVSQDLEPLTILYYIGKTPKIEQLSNMIVKSCKCS.

A signal peptide spans 1 to 20; the sequence is MHCYLLSVFLTLDLAAVALS. Asn-72, Asn-139, and Asn-240 each carry an N-linked (GlcNAc...) asparagine glycan. Cystine bridges form between Cys-307–Cys-316, Cys-315–Cys-378, Cys-344–Cys-409, and Cys-348–Cys-411.

It belongs to the TGF-beta family. Interacts with Transforming growth factor beta-2 (TGF-beta-2) chain; interaction is non-covalent and maintains (TGF-beta-2) in a latent state. As to quaternary structure, homodimer; disulfide-linked. Interacts with TGF-beta receptors (TGFBR1 and TGFBR2), leading to signal transduction. The precursor proprotein is cleaved in the Golgi apparatus to form Transforming growth factor beta-2 (TGF-beta-2) and Latency-associated peptide (LAP) chains, which remain non-covalently linked, rendering TGF-beta-2 inactive.

The protein resides in the secreted. The protein localises to the extracellular space. It is found in the extracellular matrix. Functionally, precursor of the Latency-associated peptide (LAP) and Transforming growth factor beta-2 (TGF-beta-2) chains, which constitute the regulatory and active subunit of TGF-beta-2, respectively. Required to maintain the Transforming growth factor beta-2 (TGF-beta-2) chain in a latent state during storage in extracellular matrix. Associates non-covalently with TGF-beta-2 and regulates its activation via interaction with 'milieu molecules', such as LTBP1 and LRRC32/GARP, that control activation of TGF-beta-2. In terms of biological role, multifunctional protein that regulates various processes such as angiogenesis and heart development. Activation into mature form follows different steps: following cleavage of the proprotein in the Golgi apparatus, Latency-associated peptide (LAP) and Transforming growth factor beta-2 (TGF-beta-2) chains remain non-covalently linked rendering TGF-beta-2 inactive during storage in extracellular matrix. At the same time, LAP chain interacts with 'milieu molecules', such as LTBP1 and LRRC32/GARP, that control activation of TGF-beta-2 and maintain it in a latent state during storage in extracellular milieus. Once activated following release of LAP, TGF-beta-2 acts by binding to TGF-beta receptors (TGFBR1 and TGFBR2), which transduce signal. The protein is Transforming growth factor beta-2 proprotein (TGFB2) of Gallus gallus (Chicken).